We begin with the raw amino-acid sequence, 50 residues long: Alpha-conotoxin CnIG (50 aa).

Positions 1 to 7 (LTTTVVS) are cleaved as a signal peptide. The segment covering 1–13 (LTTTVVSFPSDSA) has biased composition (polar residues). The tract at residues 1 to 26 (LTTTVVSFPSDSASDGRDNEAKDERS) is disordered. Positions 8–35 (FPSDSASDGRDNEAKDERSDMYELKRNG) are excised as a propeptide. Positions 14-26 (SDGRDNEAKDERS) are enriched in basic and acidic residues. 2 cysteine pairs are disulfide-bonded: Cys37–Cys42 and Cys38–Cys48. Residue Cys48 is modified to Cysteine amide.

It belongs to the conotoxin A superfamily. In terms of tissue distribution, expressed by the venom duct.

The protein localises to the secreted. The chain is Alpha-conotoxin CnIG from Conus consors (Singed cone).